A 464-amino-acid polypeptide reads, in one-letter code: Probable LL-diaminopimelate aminotransferase, chloroplastic (464 aa).

The N-terminal 39 residues, 1–39, are a transit peptide targeting the chloroplast; sequence MAASPAAGAAAATVSSFVSPSSFSSVKASKPDRLRPARR. Glycine 102 is a substrate binding site. Residue tyrosine 132 participates in pyridoxal 5'-phosphate binding. Residues glutamate 135, lysine 167, tyrosine 190, and asparagine 247 each contribute to the substrate site. The pyridoxal 5'-phosphate site is built by asparagine 247, aspartate 275, tyrosine 278, serine 305, and serine 307. Lysine 308 is subject to N6-(pyridoxal phosphate)lysine. Arginine 316 contributes to the pyridoxal 5'-phosphate binding site. Residues asparagine 347 and arginine 442 each contribute to the substrate site.

Belongs to the class-I pyridoxal-phosphate-dependent aminotransferase family. LL-diaminopimelate aminotransferase subfamily. Homodimer. Pyridoxal 5'-phosphate is required as a cofactor.

It localises to the plastid. It is found in the chloroplast. The catalysed reaction is (2S,6S)-2,6-diaminopimelate + 2-oxoglutarate = (S)-2,3,4,5-tetrahydrodipicolinate + L-glutamate + H2O + H(+). The protein operates within amino-acid biosynthesis; L-lysine biosynthesis via DAP pathway; LL-2,6-diaminopimelate from (S)-tetrahydrodipicolinate (aminotransferase route): step 1/1. In terms of biological role, required for lysine biosynthesis. Catalyzes the direct conversion of tetrahydrodipicolinate to LL-diaminopimelate, a reaction that requires three enzymes in E.coli. The sequence is that of Probable LL-diaminopimelate aminotransferase, chloroplastic (AGD2) from Oryza sativa subsp. japonica (Rice).